Reading from the N-terminus, the 353-residue chain is Ornithine racemase (353 aa).

Residue Lys-35 is the Proton acceptor of the active site. The residue at position 35 (Lys-35) is an N6-(pyridoxal phosphate)lysine. Arg-128 contributes to the substrate binding site.

This sequence belongs to the alanine racemase family. As to quaternary structure, homodimer. The cofactor is pyridoxal 5'-phosphate.

The enzyme catalyses L-ornithine = D-ornithine. Involved in the ornithine fermentation pathway. Catalyzes the conversion of L-ornithine to D-ornithine. OR could also racemize basic amino acids such as lysine and arginine. Serine, asparagine and alanine could be also converted by OR, but at a lower rate. In Acetoanaerobium sticklandii (strain ATCC 12662 / DSM 519 / JCM 1433 / CCUG 9281 / NCIMB 10654 / HF) (Clostridium sticklandii), this protein is Ornithine racemase.